The chain runs to 533 residues: CTP synthase (533 aa).

The tract at residues 1–269 (MKKNLKILVI…HEILSSKLNI (269 aa)) is amidoligase domain. Serine 16 contacts CTP. Serine 16 serves as a coordination point for UTP. ATP contacts are provided by residues 17–22 (GIGKGV) and aspartate 73. Mg(2+) is bound by residues aspartate 73 and glutamate 143. CTP-binding positions include 150 to 152 (DME), 190 to 195 (KSKPTQ), and lysine 226. Residues 190–195 (KSKPTQ) and lysine 226 each bind UTP. A Glutamine amidotransferase type-1 domain is found at 304 to 533 (YAELDDSYAS…LFLGLIKACI (230 aa)). Glycine 355 serves as a coordination point for L-glutamine. Cysteine 382 (nucleophile; for glutamine hydrolysis) is an active-site residue. L-glutamine-binding positions include 383–386 (LGLQ), glutamate 406, and arginine 466. Active-site residues include histidine 511 and glutamate 513.

This sequence belongs to the CTP synthase family. Homotetramer.

The enzyme catalyses UTP + L-glutamine + ATP + H2O = CTP + L-glutamate + ADP + phosphate + 2 H(+). It catalyses the reaction L-glutamine + H2O = L-glutamate + NH4(+). It carries out the reaction UTP + NH4(+) + ATP = CTP + ADP + phosphate + 2 H(+). It participates in pyrimidine metabolism; CTP biosynthesis via de novo pathway; CTP from UDP: step 2/2. With respect to regulation, allosterically activated by GTP, when glutamine is the substrate; GTP has no effect on the reaction when ammonia is the substrate. The allosteric effector GTP functions by stabilizing the protein conformation that binds the tetrahedral intermediate(s) formed during glutamine hydrolysis. Inhibited by the product CTP, via allosteric rather than competitive inhibition. In terms of biological role, catalyzes the ATP-dependent amination of UTP to CTP with either L-glutamine or ammonia as the source of nitrogen. Regulates intracellular CTP levels through interactions with the four ribonucleotide triphosphates. This is CTP synthase from Borreliella afzelii (strain PKo) (Borrelia afzelii).